A 382-amino-acid chain; its full sequence is Alkanesulfonate monooxygenase (382 aa).

It belongs to the SsuD family.

It catalyses the reaction an alkanesulfonate + FMNH2 + O2 = an aldehyde + FMN + sulfite + H2O + 2 H(+). Catalyzes the desulfonation of aliphatic sulfonates. The sequence is that of Alkanesulfonate monooxygenase from Pseudomonas putida (strain ATCC 47054 / DSM 6125 / CFBP 8728 / NCIMB 11950 / KT2440).